A 215-amino-acid polypeptide reads, in one-letter code: Pyrrolidone-carboxylate peptidase (215 aa).

Catalysis depends on residues glutamate 80, cysteine 143, and histidine 167.

It belongs to the peptidase C15 family. As to quaternary structure, homotetramer.

It is found in the cytoplasm. It catalyses the reaction Release of an N-terminal pyroglutamyl group from a polypeptide, the second amino acid generally not being Pro.. Functionally, removes 5-oxoproline from various penultimate amino acid residues except L-proline. This Yersinia pseudotuberculosis serotype O:3 (strain YPIII) protein is Pyrrolidone-carboxylate peptidase.